A 307-amino-acid chain; its full sequence is tRNA pseudouridine synthase B (307 aa).

The active-site Nucleophile is Asp39.

The protein belongs to the pseudouridine synthase TruB family. Type 1 subfamily.

The catalysed reaction is uridine(55) in tRNA = pseudouridine(55) in tRNA. Functionally, responsible for synthesis of pseudouridine from uracil-55 in the psi GC loop of transfer RNAs. The chain is tRNA pseudouridine synthase B from Lactiplantibacillus plantarum (strain ATCC BAA-793 / NCIMB 8826 / WCFS1) (Lactobacillus plantarum).